We begin with the raw amino-acid sequence, 112 residues long: Mitochondrial import inner membrane translocase subunit TIM14-3 (112 aa).

An N-acetylalanine modification is found at Ala-2. The chain crosses the membrane as a helical span at residues 6 to 28 (IAGAAVAAAAVAGRYGILAWQAF). The region spanning 53–112 (EAALILGVRESVVADKVKEAHRRVMVANHPDAGGSHYLASKINEAKDMMLGKSNNSGSAF) is the J domain.

This sequence belongs to the TIM14 family. Probable component of the PAM complex at least composed of a mitochondrial HSP70 protein, TIMM44 and TIMM14. The complex interacts with the TIMM23 component of the TIM17:23 complex.

The protein localises to the mitochondrion. Its subcellular location is the mitochondrion inner membrane. Its function is as follows. Component of the PAM complex, a complex required for the translocation of transit peptide-containing proteins from the inner membrane into the mitochondrial matrix in an ATP-dependent manner. This Arabidopsis thaliana (Mouse-ear cress) protein is Mitochondrial import inner membrane translocase subunit TIM14-3 (TIM14-3).